Reading from the N-terminus, the 287-residue chain is 4-diphosphocytidyl-2-C-methyl-D-erythritol kinase (287 aa).

Lys12 is a catalytic residue. 95 to 105 contacts ATP; it reads PAQAGMGGGSS. Residue Asp137 is part of the active site.

The protein belongs to the GHMP kinase family. IspE subfamily.

It carries out the reaction 4-CDP-2-C-methyl-D-erythritol + ATP = 4-CDP-2-C-methyl-D-erythritol 2-phosphate + ADP + H(+). It functions in the pathway isoprenoid biosynthesis; isopentenyl diphosphate biosynthesis via DXP pathway; isopentenyl diphosphate from 1-deoxy-D-xylulose 5-phosphate: step 3/6. Catalyzes the phosphorylation of the position 2 hydroxy group of 4-diphosphocytidyl-2C-methyl-D-erythritol. The protein is 4-diphosphocytidyl-2-C-methyl-D-erythritol kinase of Delftia acidovorans (strain DSM 14801 / SPH-1).